The sequence spans 603 residues: Polypeptide N-acetylgalactosaminyltransferase 10 (603 aa).

Topologically, residues 1–11 (MRRKEKRLLQA) are cytoplasmic. A helical; Signal-anchor for type II membrane protein membrane pass occupies residues 12–31 (VALALAALVLLPNVGLWALY). Topologically, residues 32 to 603 (RERQPDGSPG…STVLENFNRN (572 aa)) are lumenal. N-linked (GlcNAc...) asparagine glycans are attached at residues Asn124 and Asn146. Intrachain disulfides connect Cys135/Cys365, Cys356/Cys432, Cys471/Cys488, Cys523/Cys538, and Cys563/Cys578. The tract at residues 144 to 253 (LPNTSIIIPF…VNWLPPLLDR (110 aa)) is catalytic subdomain A. 2 residues coordinate substrate: Asp185 and Arg214. Asp237 contacts Mn(2+). Ser238 provides a ligand contact to substrate. A Mn(2+)-binding site is contributed by His239. A catalytic subdomain B region spans residues 311–373 (PFESPVMAGG…PCSRVGHIYR (63 aa)). Residue Trp342 coordinates substrate. A Mn(2+)-binding site is contributed by His370. Substrate-binding residues include Arg373 and Tyr378. A flexible loop region spans residues 373–384 (RKYVPYKVPAGV). The Ricin B-type lectin domain maps to 458 to 590 (AAWGEIRNVG…SSLTQQWLFE (133 aa)). Asn593 carries N-linked (GlcNAc...) asparagine glycosylation.

It belongs to the glycosyltransferase 2 family. GalNAc-T subfamily. It depends on Mn(2+) as a cofactor. Highly expressed in the sublingual gland, testis, small intestine, colon and ovary. Expressed at intermediate level in heart, brain, spleen, lung, stomach, cervix and uterus.

Its subcellular location is the golgi apparatus membrane. The catalysed reaction is L-seryl-[protein] + UDP-N-acetyl-alpha-D-galactosamine = a 3-O-[N-acetyl-alpha-D-galactosaminyl]-L-seryl-[protein] + UDP + H(+). It carries out the reaction L-threonyl-[protein] + UDP-N-acetyl-alpha-D-galactosamine = a 3-O-[N-acetyl-alpha-D-galactosaminyl]-L-threonyl-[protein] + UDP + H(+). It participates in protein modification; protein glycosylation. Functionally, catalyzes the initial reaction in O-linked oligosaccharide biosynthesis, the transfer of an N-acetyl-D-galactosamine residue to a serine or threonine residue on the protein receptor. Has activity toward Muc5Ac and EA2 peptide substrates. This is Polypeptide N-acetylgalactosaminyltransferase 10 (Galnt10) from Rattus norvegicus (Rat).